Here is a 571-residue protein sequence, read N- to C-terminus: Kelch-like protein 28 (571 aa).

Residues 35–102 (CDIILRVGDV…AYTGTVFISQ (68 aa)) form the BTB domain. Kelch repeat units follow at residues 284–331 (VLCA…VLDQ), 332–386 (KVFV…VLAG), 387–433 (EVFA…VLDG), 435–479 (LYAI…VMLG), 480–526 (FIFV…VIDN), and 528–570 (LYVV…GLTA).

The protein is Kelch-like protein 28 (Klhl28) of Mus musculus (Mouse).